We begin with the raw amino-acid sequence, 346 residues long: Protein U59 (346 aa).

It belongs to the herpesviridae U59/UL88 family.

The protein is Protein U59 of Elephantid herpesvirus 1 (isolate Asian elephant/Berlin/Kiba/1998) (EIHV-1).